Here is a 231-residue protein sequence, read N- to C-terminus: Small ribosomal subunit protein uS3 (231 aa).

One can recognise a KH type-2 domain in the interval 17–86 (VEKYLTKELK…SPQIEVQQVQ (70 aa)).

Belongs to the universal ribosomal protein uS3 family. Part of the 30S ribosomal subunit.

Its function is as follows. Binds the lower part of the 30S subunit head. The protein is Small ribosomal subunit protein uS3 of Methanoregula boonei (strain DSM 21154 / JCM 14090 / 6A8).